The primary structure comprises 620 residues: Probable indole-3-acetic acid-amido synthetase GH3.7 (620 aa).

The protein belongs to the IAA-amido conjugating enzyme family. In terms of tissue distribution, ubiquitous.

In terms of biological role, may catalyze the synthesis of indole-3-acetic acid (IAA)-amino acid conjugates, providing a mechanism for the plant to cope with the presence of excess auxin. The protein is Probable indole-3-acetic acid-amido synthetase GH3.7 (GH3.7) of Oryza sativa subsp. japonica (Rice).